We begin with the raw amino-acid sequence, 399 residues long: Yellow-related salivary protein LJM11 (399 aa).

The first 18 residues, 1–18 (MKVFFSIFTLVLFQGTLG), serve as a signal peptide directing secretion. The cysteines at positions 115 and 186 are disulfide-linked. Asn-213 carries N-linked (GlcNAc...) asparagine glycosylation. A disulfide bridge links Cys-319 with Cys-395. Thr-345, Asn-360, and Phe-362 together coordinate serotonin.

This sequence belongs to the major royal jelly protein family. Salivary gland (at protein level).

Its subcellular location is the secreted. Functionally, probably modulates blood feeding of sand flies on vertebrate species by binding and sequestering different mediators involved in the host response. Binds biogenic amines. Binds serotonin with high affinity. Binds adrenaline and noradrenaline. Binds dopamine and octopamine. Poorly binds histamine. Induces a delayed type hypersensitivity response in host tissues. Induces systemic Th1 immune response in the host. Immunogenic; elicits antibody production in the host. Functions as a chemoattractant for host neutrophils; likely acts through a G-protein-coupled receptor and effect is dependent on calcium influx. (Microbial infection) Modulates infection caused by Leishmania species in the host. The sequence is that of Yellow-related salivary protein LJM11 from Lutzomyia longipalpis (Sand fly).